The following is a 75-amino-acid chain: MIVRVCMGSSCHLKGSYEVVRRFQELQKKYNFKLYGSLCFGNCSQGVCVEIDGRLFSRVTPENAEEILKKVLQNG.

[2Fe-2S] cluster-binding residues include Cys-6, Cys-11, Cys-39, and Cys-43.

It depends on [2Fe-2S] cluster as a cofactor.

Its function is as follows. Might be part of a multi-protein complex, possibly involved in metal cluster assembly. The chain is Protein TM_1420 from Thermotoga maritima (strain ATCC 43589 / DSM 3109 / JCM 10099 / NBRC 100826 / MSB8).